The chain runs to 305 residues: Protoheme IX farnesyltransferase 2 (305 aa).

Transmembrane regions (helical) follow at residues 31 to 51 (VVML…ETWI), 53 to 73 (WKIL…AAVI), 103 to 123 (ALVF…LWVN), 125 to 145 (LTAL…TMYL), 152 to 172 (NIVI…TAVT), 179 to 199 (ALLL…ALAI), 231 to 251 (VLLA…AIYL), and 277 to 297 (AMKT…VLLV).

The protein belongs to the UbiA prenyltransferase family. Protoheme IX farnesyltransferase subfamily.

It is found in the cell inner membrane. The enzyme catalyses heme b + (2E,6E)-farnesyl diphosphate + H2O = Fe(II)-heme o + diphosphate. It functions in the pathway porphyrin-containing compound metabolism; heme O biosynthesis; heme O from protoheme: step 1/1. Converts heme B (protoheme IX) to heme O by substitution of the vinyl group on carbon 2 of heme B porphyrin ring with a hydroxyethyl farnesyl side group. The chain is Protoheme IX farnesyltransferase 2 from Pseudoalteromonas atlantica (strain T6c / ATCC BAA-1087).